The chain runs to 193 residues: Peptidyl-tRNA hydrolase (193 aa).

Tyr-16 is a binding site for tRNA. Catalysis depends on His-21, which acts as the Proton acceptor. Phe-66, Asn-68, and Asn-114 together coordinate tRNA.

It belongs to the PTH family. As to quaternary structure, monomer.

The protein localises to the cytoplasm. The enzyme catalyses an N-acyl-L-alpha-aminoacyl-tRNA + H2O = an N-acyl-L-amino acid + a tRNA + H(+). Hydrolyzes ribosome-free peptidyl-tRNAs (with 1 or more amino acids incorporated), which drop off the ribosome during protein synthesis, or as a result of ribosome stalling. Its function is as follows. Catalyzes the release of premature peptidyl moieties from peptidyl-tRNA molecules trapped in stalled 50S ribosomal subunits, and thus maintains levels of free tRNAs and 50S ribosomes. The polypeptide is Peptidyl-tRNA hydrolase (Pelobacter propionicus (strain DSM 2379 / NBRC 103807 / OttBd1)).